An 892-amino-acid chain; its full sequence is LEAF RUST 10 DISEASE-RESISTANCE LOCUS RECEPTOR-LIKE PROTEIN KINASE-like 2.8 (892 aa).

A signal peptide spans Met1–Ser27. Over Asn28 to Thr496 the chain is Extracellular. 12 N-linked (GlcNAc...) asparagine glycosylation sites follow: Asn42, Asn71, Asn88, Asn112, Asn186, Asn222, Asn230, Asn286, Asn358, Asn384, Asn407, and Asn458. The chain crosses the membrane as a helical span at residues Phe497–Cys517. Topologically, residues Phe518–Leu892 are cytoplasmic. The residue at position 547 (Thr547) is a Phosphothreonine. The Protein kinase domain maps to Lys556–Leu854. Residues Val562 to Val570 and Lys584 contribute to the ATP site. A Phosphotyrosine modification is found at Tyr629. The Proton acceptor role is filled by Asp680. Thr717 and Thr720 each carry phosphothreonine.

It belongs to the protein kinase superfamily. Ser/Thr protein kinase family.

Its subcellular location is the membrane. The catalysed reaction is L-seryl-[protein] + ATP = O-phospho-L-seryl-[protein] + ADP + H(+). It carries out the reaction L-threonyl-[protein] + ATP = O-phospho-L-threonyl-[protein] + ADP + H(+). This chain is LEAF RUST 10 DISEASE-RESISTANCE LOCUS RECEPTOR-LIKE PROTEIN KINASE-like 2.8, found in Arabidopsis thaliana (Mouse-ear cress).